We begin with the raw amino-acid sequence, 377 residues long: 5-hydroxytryptamine receptor 1D (377 aa).

N5, N17, and N21 each carry an N-linked (GlcNAc...) asparagine glycan. Helical transmembrane passes span 39–64 (ISLA…TTIF), 76–97 (LIGS…ISIA), and 110–134 (LCDI…VIAL). A disulfide bond links C111 and C188. Residues D118 and C122 each contribute to the serotonin site. Positions 135–137 (DRY) match the DRY motif; important for ligand-induced conformation changes motif. Transmembrane regions (helical) follow at residues 155 to 176 (AAVM…PLFW), 195 to 218 (ISYT…ILYG), 301 to 326 (KTLG…VLPI), and 336 to 359 (ALFD…YTVF). Serotonin is bound at residue S321. The NPxxY motif; important for ligand-induced conformation changes and signaling motif lies at 352–356 (NPIIY).

The protein belongs to the G-protein coupled receptor 1 family. Homodimer. Heterodimer with HTR1B.

It localises to the cell membrane. G-protein coupled receptor for 5-hydroxytryptamine (serotonin). Also functions as a receptor for ergot alkaloid derivatives, various anxiolytic and antidepressant drugs and other psychoactive substances. Ligand binding causes a conformation change that triggers signaling via guanine nucleotide-binding proteins (G proteins) and modulates the activity of downstream effectors, such as adenylate cyclase. HTR1D is coupled to G(i)/G(o) G alpha proteins and mediates inhibitory neurotransmission by inhibiting adenylate cyclase activity. Regulates the release of 5-hydroxytryptamine in the brain, and thereby affects neural activity. May also play a role in regulating the release of other neurotransmitters. May play a role in vasoconstriction. This Canis lupus familiaris (Dog) protein is 5-hydroxytryptamine receptor 1D (HTR1D).